A 160-amino-acid chain; its full sequence is SUMO-conjugating enzyme SCE1 (160 aa).

At alanine 2 the chain carries N-acetylalanine. Residues 5-158 enclose the UBC core domain; it reads IARGRLAEER…VKLQSKQYPA (154 aa). Catalysis depends on cysteine 94, which acts as the Glycyl thioester intermediate.

The protein belongs to the ubiquitin-conjugating enzyme family. In terms of assembly, interacts with SIZ1 (via PHD domain) and MMS21. Interacts with TCP14 and TCP15. Interacts with KIN10.

It participates in protein modification; protein sumoylation. SUMO-conjugating enzyme that accepts the SUMO proteins from the E1 SUMO-activating heterodimer SAE1/SAE2 and catalyzes its covalent attachment to other proteins with the E3 SUMO ligases SIZ1 and MMS21. Associates with SIZ1 for sumoylation of the transcription factor GTE3. The protein is SUMO-conjugating enzyme SCE1 (SCE1) of Arabidopsis thaliana (Mouse-ear cress).